The following is an 816-amino-acid chain: MNIESEKEQFLKEFGSYYGYANSPKNIDEIRATEFKRLNDTVYLDHAGATLYSESQMEAVFKDLNSTLYGNPHSQSTCSLATEDIVGKARQQVLSFFNASPREYSCIFTSGATAALKLVGETFPWSSNSSFMYSMENHNSVLGIREYALSKGAAAFAVDIEDTHVGESESPQSNLKLTQHHIQRRNEGGVLKEGMTGNTYNLFAFPSECNFSGRKFDPNLIKIIKEGSERILESSQYSRGCWLVLIDAAKGCATNPPNLSMFKADFVVFSFYKLFGYPTGLGALIVRKDAAKLMKKTYFSGGTVTAAIADVDFFKRREGVEEFFEDGTISFLSITAIQHGFKIINMLTTSSIFRHTTSIAAYVRNKLLALKHENGEFVCTLYGLLSSEMGPTVSFNMKRPDGTWYGYREVEKLATLAGIQLRTGCFCNPGACAKYLGLSHLDLLSNIEAGHVCWDDRDILHGKPTGAVRVSFGYMSTFEDAMKFVNFVESNFVISSFNRCALQPRSISLPIEGIAEAAARHFLTSITVYPIKSCAGFSVDQWPLTSTGLLHDREWILKSTTGEILTQKKVPEMCYISTLIDLNLGKLFVESPRCKEKLQIELKSSSLVTERDEMDIQNHRYEVTSYNNEVDIWFSRAIDRPCTLLRNSDSQSHSCINKNGSPGMCRDVGARLNFVNEAQFLLISEESIKDLNSRLKSNGRRRNGGQAVQVGVMRFRPNLVASSGEPYAEDGWSNINIGGKYFMSLGGCNRCQMININPEAGEVQRFTEPLATLAGYRRAKGKIMFGILLRYENNTKTESDTWIRVGEEIIPNGDRH.

N6-(pyridoxal phosphate)lysine is present on K273. C427 is a catalytic residue. The MOSC domain maps to N647–N812.

Belongs to the class-V pyridoxal-phosphate-dependent aminotransferase family. MOCOS subfamily. Pyridoxal 5'-phosphate serves as cofactor. Ubiquitously expressed.

The enzyme catalyses Mo-molybdopterin + L-cysteine + AH2 = thio-Mo-molybdopterin + L-alanine + A + H2O. The protein operates within cofactor biosynthesis; molybdopterin biosynthesis. In terms of biological role, sulfurates the molybdenum cofactor. Sulfation of molybdenum is essential for xanthine dehydrogenase (XDH) and aldehyde oxidase (ADO) enzymes in which molybdenum cofactor is liganded by 1 oxygen and 1 sulfur atom in active form. The polypeptide is Molybdenum cofactor sulfurase (FLACCA) (Solanum lycopersicum (Tomato)).